The chain runs to 174 residues: ATP-dependent protease subunit HslV (174 aa).

The active site involves Thr-2. Na(+) is bound by residues Gly-157, Cys-160, and Thr-163.

This sequence belongs to the peptidase T1B family. HslV subfamily. As to quaternary structure, a double ring-shaped homohexamer of HslV is capped on each side by a ring-shaped HslU homohexamer. The assembly of the HslU/HslV complex is dependent on binding of ATP.

It is found in the cytoplasm. It carries out the reaction ATP-dependent cleavage of peptide bonds with broad specificity.. With respect to regulation, allosterically activated by HslU binding. Its function is as follows. Protease subunit of a proteasome-like degradation complex believed to be a general protein degrading machinery. The polypeptide is ATP-dependent protease subunit HslV (Shewanella putrefaciens (strain CN-32 / ATCC BAA-453)).